The chain runs to 192 residues: Interleukin-18 (192 aa).

Residues 1–35 (MAAEPEDNCISFVEMKFINNTLYFVAENDEDLESD) constitute a propeptide that is removed on maturation.

This sequence belongs to the IL-1 family. As to quaternary structure, forms a ternary complex with ligand-binding receptor subunit IL18R1 and signaling receptor subunit IL18RAP at the plasma membrane. Mature IL18 first binds to IL18R1 forming a low affinity binary complex, which then interacts with IL18RAP to form a high affinity ternary complex that signals inside the cell. Interacts with cargo receptor TMED10; the interaction mediates the translocation from the cytoplasm into the ERGIC (endoplasmic reticulum-Golgi intermediate compartment) and thereby secretion. The pro-IL-18 precursor is processed by CASP1, CASP4 or CASP5 to yield its mature, active form. The pro-IL-18 precursor features autoinhibitory interactions between the propeptide and the post-cleavage-site region, preventing recognition by the IL18R1 receptor. Processing by CASP1, CASP4 or CASP5 induces conformational changes to generate critical receptor-binding sites. The mature form is then secreted and released in the extracellular milieu by passing through the gasdermin-D (GSDMD) pore. In contrast, cleavage by CASP3 inactivates IL18.

Its subcellular location is the cytoplasm. The protein resides in the cytosol. It is found in the secreted. Functionally, pro-inflammatory cytokine primarily involved in epithelial barrier repair, polarized T-helper 1 (Th1) cell and natural killer (NK) cell immune responses. Upon binding to IL18R1 and IL18RAP, forms a signaling ternary complex which activates NF-kappa-B, triggering synthesis of inflammatory mediators. Synergizes with IL12/interleukin-12 to induce IFNG synthesis from T-helper 1 (Th1) cells and natural killer (NK) cells. Involved in transduction of inflammation downstream of pyroptosis: its mature form is specifically released in the extracellular milieu by passing through the gasdermin-D (GSDMD) pore. The chain is Interleukin-18 (IL18) from Sus scrofa (Pig).